The chain runs to 727 residues: Elongation factor 2 (727 aa).

One can recognise a tr-type G domain in the interval 19–260 (DQIRNMGICA…MAIKHLPNPL (242 aa)). GTP is bound by residues 28 to 35 (AHIDHGKT), 94 to 98 (DTPGH), and 148 to 151 (NKVD). Histidine 603 bears the Diphthamide mark.

Belongs to the TRAFAC class translation factor GTPase superfamily. Classic translation factor GTPase family. EF-G/EF-2 subfamily.

The protein localises to the cytoplasm. Functionally, catalyzes the GTP-dependent ribosomal translocation step during translation elongation. During this step, the ribosome changes from the pre-translocational (PRE) to the post-translocational (POST) state as the newly formed A-site-bound peptidyl-tRNA and P-site-bound deacylated tRNA move to the P and E sites, respectively. Catalyzes the coordinated movement of the two tRNA molecules, the mRNA and conformational changes in the ribosome. This is Elongation factor 2 from Methanococcus maripaludis (strain C7 / ATCC BAA-1331).